We begin with the raw amino-acid sequence, 166 residues long: Small ribosomal subunit protein uS5 (166 aa).

An S5 DRBM domain is found at 11–74; it reads LQEKLISVNR…DKARKNMIII (64 aa).

This sequence belongs to the universal ribosomal protein uS5 family. In terms of assembly, part of the 30S ribosomal subunit. Contacts proteins S4 and S8.

In terms of biological role, with S4 and S12 plays an important role in translational accuracy. Its function is as follows. Located at the back of the 30S subunit body where it stabilizes the conformation of the head with respect to the body. This is Small ribosomal subunit protein uS5 from Wigglesworthia glossinidia brevipalpis.